The following is a 165-amino-acid chain: Ribosome maturation factor RimM (165 aa).

Residues 94–165 (EDEFYIADLN…YVILNYQTKV (72 aa)) form the PRC barrel domain.

It belongs to the RimM family. Binds ribosomal protein uS19.

The protein resides in the cytoplasm. In terms of biological role, an accessory protein needed during the final step in the assembly of 30S ribosomal subunit, possibly for assembly of the head region. Essential for efficient processing of 16S rRNA. May be needed both before and after RbfA during the maturation of 16S rRNA. It has affinity for free ribosomal 30S subunits but not for 70S ribosomes. This is Ribosome maturation factor RimM from Rickettsia typhi (strain ATCC VR-144 / Wilmington).